The primary structure comprises 337 residues: m7GpppX diphosphatase (337 aa).

The tract at residues Met-1 to Ser-37 is disordered. Residue Ala-2 is modified to N-acetylalanine. The short motif at Lys-10–Arg-13 is the nuclear localization signal (NLS) element. Ser-24 and Ser-101 each carry phosphoserine. N6-acetyllysine occurs at positions 138 and 142. Residues Lys-142 to Thr-154 carry the nuclear export sequence (NES) motif. Residues Trp-175, Glu-185, Asp-205, Lys-207, and His-268–His-279 contribute to the substrate site. A Histidine triad motif motif is present at residues His-275–His-279. His-277 functions as the Nucleophile in the catalytic mechanism.

This sequence belongs to the HIT family. In terms of assembly, homodimer. Associates with components of the exosome multienzyme ribonuclease complex, such as EXOSC3 and EXOSC4. Interacts with NDOR1.

The protein resides in the cytoplasm. It localises to the nucleus. The catalysed reaction is a 5'-end (N(7)-methyl 5'-triphosphoguanosine)-ribonucleoside in mRNA + H2O = N(7)-methyl-GMP + a 5'-end diphospho-ribonucleoside in mRNA + 2 H(+). Its activity is regulated as follows. The hydrolytic product 7-methylguanosine diphosphate (m7GDP) efficiently inhibits the decapping scavenger activity and acts as a competitive inhibitor in vitro. Inhibited by 2,4-diaminoquinazoline. Decapping scavenger enzyme that catalyzes the cleavage of a residual cap structure following the degradation of mRNAs by the 3'-&gt;5' exosome-mediated mRNA decay pathway. Hydrolyzes cap analog structures like 7-methylguanosine nucleoside triphosphate (m7GpppG) with up to 10 nucleotide substrates (small capped oligoribonucleotides) and specifically releases 5'-phosphorylated RNA fragments and 7-methylguanosine monophosphate (m7GMP). Cleaves cap analog structures like tri-methyl guanosine nucleoside triphosphate (m3(2,2,7)GpppG) with very poor efficiency. Does not hydrolyze unmethylated cap analog (GpppG) and shows no decapping activity on intact m7GpppG-capped mRNA molecules longer than 25 nucleotides. Does not hydrolyze 7-methylguanosine diphosphate (m7GDP) to m7GMP. May also play a role in the 5'-&gt;3 mRNA decay pathway; m7GDP, the downstream product released by the 5'-&gt;3' mRNA mediated decapping activity, may be also converted by DCPS to m7GMP. Binds to m7GpppG and strongly to m7GDP. Plays a role in first intron splicing of pre-mRNAs. Inhibits activation-induced cell death. This is m7GpppX diphosphatase (DCPS) from Sus scrofa (Pig).